Consider the following 86-residue polypeptide: Small ribosomal subunit protein bS16 (86 aa).

It belongs to the bacterial ribosomal protein bS16 family.

This Bordetella petrii (strain ATCC BAA-461 / DSM 12804 / CCUG 43448) protein is Small ribosomal subunit protein bS16.